Consider the following 1497-residue polypeptide: ABC multidrug transporter C (1497 aa).

Over residues 1–13 the composition is skewed to polar residues; that stretch reads MSLLGTINPNINP. Residues 1–21 form a disordered region; that stretch reads MSLLGTINPNINPERTVAGRG. N-linked (GlcNAc...) asparagine glycosylation is found at N137 and N336. Residues 158–412 enclose the ABC transporter 1 domain; it reads LEVGTLVRRI…FTNMGFECPE (255 aa). Transmembrane regions (helical) follow at residues 523-543, 557-577, 599-621, 632-652, and 665-685; these read LTMSQLIGNFIMALVIGSVFY, ALLFFAVLLNAFSSALEILTL, AIASMLCDMPYKITNAIIFNLTL, GAFFVFLLFSFVTTLTMSMLF, and ALVPAAILILGLVIYTGFTIP. N762 carries N-linked (GlcNAc...) asparagine glycosylation. A helical membrane pass occupies residues 777-797; sequence GIMFGFMFFFMFTYLTATEYI. The disordered stretch occupies residues 815 to 843; sequence QPTGSHDVEKSPEVSSAAKTDEASSKEAT. The 244-residue stretch at 853 to 1096 folds into the ABC transporter 2 domain; the sequence is FQWKDVCYDI…LASYFERNGA (244 aa). 889-896 is a binding site for ATP; that stretch reads GVSGAGKT. The next 5 helical transmembrane spans lie at 1192 to 1212, 1226 to 1246, 1273 to 1293, 1313 to 1333, and 1352 to 1372; these read YIYSKTALCVLTALYIGFSFF, FSIFMLMTIFGNLVQQIMPNF, IIVELPWNTLMAFLIFVCWYY, LMFLLIWSFLLFTSTFAHMMI, and LCLIFCGVLAPPQSLPGFWIF. A glycan (N-linked (GlcNAc...) asparagine) is linked at N1411. The helical transmembrane segment at 1464-1484 threads the bilayer; that stretch reads FGIMWAYIIFNIFAAVFIYWL.

The protein belongs to the ABC transporter superfamily. ABCG family. PDR (TC 3.A.1.205) subfamily.

It localises to the cell membrane. The enzyme catalyses fluconazole(in) + ATP + H2O = fluconazole(out) + ADP + phosphate + H(+). It carries out the reaction itraconazole(in) + ATP + H2O = itraconazole(out) + ADP + phosphate + H(+). It catalyses the reaction voriconazole(in) + ATP + H2O = voriconazole(out) + ADP + phosphate + H(+). The efflux inhibitor FK506 impairs the transport activity. Functionally, pleiotropic ABC efflux transporter that shows a strong substrate specificity for the azole class of drugs such as lotrimazole (CLT), fluconazole (FLC), itraconazole (ITC), ketoconazole (KTC), posaconazole (POS), tebuconazole (TEBZ), and voriconazole (VRC). Is also able to transport rhodamine 6G (R-6G), a known substrate for many ABC transporters. Required for normal pathogenesis in a Galleria mellonella (greater wax moth) infection model. The polypeptide is ABC multidrug transporter C (Aspergillus fumigatus (strain ATCC MYA-4609 / CBS 101355 / FGSC A1100 / Af293) (Neosartorya fumigata)).